We begin with the raw amino-acid sequence, 230 residues long: Ribosomal RNA small subunit methyltransferase G (230 aa).

Residues glycine 91, leucine 96, valine 142–glutamate 143, and arginine 161 each bind S-adenosyl-L-methionine.

The protein belongs to the methyltransferase superfamily. RNA methyltransferase RsmG family.

The protein resides in the cytoplasm. The enzyme catalyses guanosine(527) in 16S rRNA + S-adenosyl-L-methionine = N(7)-methylguanosine(527) in 16S rRNA + S-adenosyl-L-homocysteine. Specifically methylates the N7 position of guanine in position 527 of 16S rRNA. This Burkholderia pseudomallei (strain K96243) protein is Ribosomal RNA small subunit methyltransferase G.